Reading from the N-terminus, the 241-residue chain is Uridylate kinase (241 aa).

Position 15 to 18 (15 to 18 (KLSG)) interacts with ATP. The segment at 23 to 28 (GAEGFG) is involved in allosteric activation by GTP. Gly-57 serves as a coordination point for UMP. ATP is bound by residues Gly-58 and Arg-62. Residues Asp-77 and 138-145 (TGNPFFTT) contribute to the UMP site. The ATP site is built by Thr-165, Phe-171, and Asp-174.

Belongs to the UMP kinase family. In terms of assembly, homohexamer.

The protein resides in the cytoplasm. It carries out the reaction UMP + ATP = UDP + ADP. It functions in the pathway pyrimidine metabolism; CTP biosynthesis via de novo pathway; UDP from UMP (UMPK route): step 1/1. With respect to regulation, allosterically activated by GTP. Inhibited by UTP. Functionally, catalyzes the reversible phosphorylation of UMP to UDP. The polypeptide is Uridylate kinase (Sodalis glossinidius (strain morsitans)).